Reading from the N-terminus, the 79-residue chain is Acyl carrier protein (79 aa).

The 76-residue stretch at 2–77 (SDIEARVKKI…NAVDYATKNQ (76 aa)) folds into the Carrier domain. Ser-37 is modified (O-(pantetheine 4'-phosphoryl)serine).

Belongs to the acyl carrier protein (ACP) family. 4'-phosphopantetheine is transferred from CoA to a specific serine of apo-ACP by AcpS. This modification is essential for activity because fatty acids are bound in thioester linkage to the sulfhydryl of the prosthetic group.

The protein localises to the cytoplasm. The protein operates within lipid metabolism; fatty acid biosynthesis. In terms of biological role, carrier of the growing fatty acid chain in fatty acid biosynthesis. This Variovorax paradoxus (strain S110) protein is Acyl carrier protein.